A 329-amino-acid chain; its full sequence is Ubiquitin carboxyl-terminal hydrolase isozyme L5 (329 aa).

Residues 7–225 (EWCLMESDPG…IRFNLMAIVS (219 aa)) enclose the UCH catalytic domain. N6-succinyllysine is present on K47. C88 functions as the Nucleophile in the catalytic mechanism. K158 is subject to N6-acetyllysine. H164 (proton donor) is an active-site residue. K289 carries the post-translational modification N6-succinyllysine. The ULD domain maps to 291–319 (NYLPFIMELLKTLAEHQQLIPLVEKAKEK). An interaction with ADRM1 region spans residues 313 to 329 (VEKAKEKQNAKKAQETK).

This sequence belongs to the peptidase C12 family. In terms of assembly, component of the 19S (PA700) regulatory complex of the 26S proteasome. Interacts with ADRM1 and NFRKB. Component of the INO80 complex; specifically part of a complex module associated with N-terminus of INO80.

Its subcellular location is the cytoplasm. The protein resides in the nucleus. The enzyme catalyses Thiol-dependent hydrolysis of ester, thioester, amide, peptide and isopeptide bonds formed by the C-terminal Gly of ubiquitin (a 76-residue protein attached to proteins as an intracellular targeting signal).. Its activity is regulated as follows. Activated by ADRM1. Inhibited by interaction with NFRKB. In terms of biological role, protease that specifically cleaves 'Lys-48'-linked polyubiquitin chains. Deubiquitinating enzyme associated with the 19S regulatory subunit of the 26S proteasome. Putative regulatory component of the INO80 complex; however is inactive in the INO80 complex and is activated by a transient interaction of the INO80 complex with the proteasome via ADRM1. This is Ubiquitin carboxyl-terminal hydrolase isozyme L5 (Uchl5) from Mus musculus (Mouse).